The sequence spans 140 residues: Nucleoside diphosphate kinase (140 aa).

Lys-11, Phe-59, Arg-87, Thr-93, Arg-104, and Asn-114 together coordinate ATP. The active-site Pros-phosphohistidine intermediate is the His-117.

This sequence belongs to the NDK family. Homotetramer. Requires Mg(2+) as cofactor.

It is found in the cytoplasm. The enzyme catalyses a 2'-deoxyribonucleoside 5'-diphosphate + ATP = a 2'-deoxyribonucleoside 5'-triphosphate + ADP. It carries out the reaction a ribonucleoside 5'-diphosphate + ATP = a ribonucleoside 5'-triphosphate + ADP. Major role in the synthesis of nucleoside triphosphates other than ATP. The ATP gamma phosphate is transferred to the NDP beta phosphate via a ping-pong mechanism, using a phosphorylated active-site intermediate. This chain is Nucleoside diphosphate kinase, found in Rhodopseudomonas palustris (strain BisB5).